The following is a 1115-amino-acid chain: Tbc2 translation factor, chloroplastic (1115 aa).

2 stretches are compositionally biased toward low complexity: residues Thr69–Ser87 and Arg163–Ala175. Disordered stretches follow at residues Thr69 to Leu90 and Arg163 to Ser210. Positions Arg176–Gly186 are enriched in gly residues. The span at Ser187 to Ser210 shows a compositional bias: low complexity. Repeat copies occupy residues Leu483 to Ala521, Leu607 to Ala645, Leu685 to Ala723, Leu724 to Leu763, Met764 to Cys803, Leu804 to Arg842, Met843 to Arg880, Pro990 to Trp1029, and Trp1030 to Ala1068. The 9 X 38 AA approximate repeats stretch occupies residues Leu483–Ala1068.

In terms of assembly, part of a 400 kDa complex which is not stably associated with RNA.

The protein localises to the plastid. It localises to the chloroplast stroma. Required for expression of the chloroplast encoded psbC mRNA, most likely for translation initiation. Interacts with the 5'-UTR of psbC. The sequence is that of Tbc2 translation factor, chloroplastic (TBC2) from Chlamydomonas reinhardtii (Chlamydomonas smithii).